We begin with the raw amino-acid sequence, 205 residues long: Small ribosomal subunit protein uS4 (205 aa).

One can recognise an S4 RNA-binding domain in the interval Ser94–Ile157.

This sequence belongs to the universal ribosomal protein uS4 family. Part of the 30S ribosomal subunit. Contacts protein S5. The interaction surface between S4 and S5 is involved in control of translational fidelity.

Its function is as follows. One of the primary rRNA binding proteins, it binds directly to 16S rRNA where it nucleates assembly of the body of the 30S subunit. In terms of biological role, with S5 and S12 plays an important role in translational accuracy. The protein is Small ribosomal subunit protein uS4 of Rickettsia canadensis (strain McKiel).